The following is a 620-amino-acid chain: Glutathione-regulated potassium-efflux system protein KefC (620 aa).

The Periplasmic segment spans residues M1–S3. A helical transmembrane segment spans residues H4–V24. Residue R25 is a topological domain, cytoplasmic. The helical transmembrane segment at L26–L46 threads the bilayer. Residues R47–E53 lie on the Periplasmic side of the membrane. A helical membrane pass occupies residues S54–L74. Over D75–G89 the chain is Cytoplasmic. The helical transmembrane segment at G90 to L110 threads the bilayer. Over R111–Q113 the chain is Periplasmic. Residues V114–M134 traverse the membrane as a helical segment. Residues N135–A148 are Cytoplasmic-facing. The helical transmembrane segment at F149–L169 threads the bilayer. The Periplasmic segment spans residues A170–T177. The chain crosses the membrane as a helical span at residues M178–L198. Residues G199–S213 are Cytoplasmic-facing. Residues G214 to L233 traverse the membrane as a helical segment. Residues L234–E236 are Periplasmic-facing. The helical transmembrane segment at V237–S254 threads the bilayer. At S255–K269 the chain is on the cytoplasmic side. Residues G270–L290 form a helical membrane-spanning segment. Over E291–P293 the chain is Periplasmic. A helical membrane pass occupies residues L294–I314. Topologically, residues A315–R326 are cytoplasmic. The chain crosses the membrane as a helical span at residues W327–Q347. Topologically, residues M348–K358 are periplasmic. The chain crosses the membrane as a helical span at residues S359 to N379. Residues R380–S620 lie on the Cytoplasmic side of the membrane. The RCK N-terminal domain occupies Q399 to T518. The interval G597–S620 is disordered.

It belongs to the monovalent cation:proton antiporter 2 (CPA2) transporter (TC 2.A.37) family. KefC subfamily. Homodimer. Interacts with the regulatory subunit KefF.

Its subcellular location is the cell inner membrane. Functionally, pore-forming subunit of a potassium efflux system that confers protection against electrophiles. Catalyzes K(+)/H(+) antiport. This chain is Glutathione-regulated potassium-efflux system protein KefC, found in Escherichia coli O6:H1 (strain CFT073 / ATCC 700928 / UPEC).